We begin with the raw amino-acid sequence, 470 residues long: Neuraminidase (470 aa).

Residues 1 to 6 lie on the Intravirion side of the membrane; the sequence is MNPNQK. A helical membrane pass occupies residues 7-27; it reads IICISATGMTLSVVSLLVGIA. Positions 11-33 are involved in apical transport and lipid raft association; sequence SATGMTLSVVSLLVGIANLGLNI. Over 28–470 the chain is Virion surface; it reads NLGLNIGLHY…HDGAEIIYFE (443 aa). The hypervariable stalk region stretch occupies residues 36-88; the sequence is HYKVGDTPNVNIPNVNGTNSTTTIINNNTQNNFTNITNIIQSKGGERTFLNLT. Asparagine 51, asparagine 54, asparagine 62, asparagine 67, asparagine 70, and asparagine 86 each carry an N-linked (GlcNAc...) asparagine; by host glycan. The interval 91–470 is head of neuraminidase; it reads LCEVNSWHIL…HDGAEIIYFE (380 aa). 9 disulfides stabilise this stretch: cysteine 92–cysteine 419, cysteine 124–cysteine 129, cysteine 176–cysteine 194, cysteine 184–cysteine 231, cysteine 233–cysteine 238, cysteine 279–cysteine 292, cysteine 281–cysteine 290, cysteine 319–cysteine 337, and cysteine 423–cysteine 449. Arginine 118 is a binding site for substrate. Asparagine 146 carries an N-linked (GlcNAc...) asparagine; by host glycan. The active-site Proton donor/acceptor is the aspartate 151. Arginine 152 contributes to the substrate binding site. Asparagine 201 is a glycosylation site (N-linked (GlcNAc...) asparagine; by host). 277–278 provides a ligand contact to substrate; the sequence is EE. Position 293 (arginine 293) interacts with substrate. The Ca(2+) site is built by aspartate 294, glycine 298, aspartate 325, and proline 348. Residue arginine 372 participates in substrate binding. N-linked (GlcNAc...) asparagine; by host glycosylation is present at asparagine 402. Tyrosine 406 acts as the Nucleophile in catalysis.

This sequence belongs to the glycosyl hydrolase 34 family. In terms of assembly, homotetramer. The cofactor is Ca(2+). N-glycosylated.

The protein resides in the virion membrane. Its subcellular location is the host apical cell membrane. It catalyses the reaction Hydrolysis of alpha-(2-&gt;3)-, alpha-(2-&gt;6)-, alpha-(2-&gt;8)- glycosidic linkages of terminal sialic acid residues in oligosaccharides, glycoproteins, glycolipids, colominic acid and synthetic substrates.. Its activity is regulated as follows. Inhibited by the neuraminidase inhibitors zanamivir (Relenza) and oseltamivir (Tamiflu). These drugs interfere with the release of progeny virus from infected cells and are effective against all influenza strains. Resistance to neuraminidase inhibitors is quite rare. Catalyzes the removal of terminal sialic acid residues from viral and cellular glycoconjugates. Cleaves off the terminal sialic acids on the glycosylated HA during virus budding to facilitate virus release. Additionally helps virus spread through the circulation by further removing sialic acids from the cell surface. These cleavages prevent self-aggregation and ensure the efficient spread of the progeny virus from cell to cell. Otherwise, infection would be limited to one round of replication. Described as a receptor-destroying enzyme because it cleaves a terminal sialic acid from the cellular receptors. May facilitate viral invasion of the upper airways by cleaving the sialic acid moieties on the mucin of the airway epithelial cells. Likely to plays a role in the budding process through its association with lipid rafts during intracellular transport. May additionally display a raft-association independent effect on budding. Plays a role in the determination of host range restriction on replication and virulence. Sialidase activity in late endosome/lysosome traffic seems to enhance virus replication. The chain is Neuraminidase from Influenza A virus (strain A/Duck/England/1/1956 H11N6).